Reading from the N-terminus, the 120-residue chain is Ribonuclease P protein component (120 aa).

The protein belongs to the RnpA family. In terms of assembly, consists of a catalytic RNA component (M1 or rnpB) and a protein subunit.

The enzyme catalyses Endonucleolytic cleavage of RNA, removing 5'-extranucleotides from tRNA precursor.. RNaseP catalyzes the removal of the 5'-leader sequence from pre-tRNA to produce the mature 5'-terminus. It can also cleave other RNA substrates such as 4.5S RNA. The protein component plays an auxiliary but essential role in vivo by binding to the 5'-leader sequence and broadening the substrate specificity of the ribozyme. The polypeptide is Ribonuclease P protein component (Dehalococcoides mccartyi (strain ATCC BAA-2266 / KCTC 15142 / 195) (Dehalococcoides ethenogenes (strain 195))).